We begin with the raw amino-acid sequence, 118 residues long: Ribonuclease P protein component (118 aa).

Belongs to the RnpA family. As to quaternary structure, consists of a catalytic RNA component (M1 or rnpB) and a protein subunit.

It carries out the reaction Endonucleolytic cleavage of RNA, removing 5'-extranucleotides from tRNA precursor.. Its function is as follows. RNaseP catalyzes the removal of the 5'-leader sequence from pre-tRNA to produce the mature 5'-terminus. It can also cleave other RNA substrates such as 4.5S RNA. The protein component plays an auxiliary but essential role in vivo by binding to the 5'-leader sequence and broadening the substrate specificity of the ribozyme. This chain is Ribonuclease P protein component, found in Vibrio vulnificus (strain CMCP6).